A 63-amino-acid polypeptide reads, in one-letter code: Adipokinetic prohormone type 1 (63 aa).

An N-terminal signal peptide occupies residues 1-22; that stretch reads MVQRCLVVALLVVVVAAALCSA. The residue at position 23 (glutamine 23) is a Pyrrolidone carboxylic acid. Position 32 is a threonine amide (threonine 32).

The protein belongs to the AKH/HRTH/RPCH family. Adipokinetic hormone precursor-related peptide (APRP) can form three type of disulfide-bond dimers: p1 (alpha-alpha), p2 (alpha-beta), and p3 (beta-beta).

The protein localises to the secreted. This hormone, released from cells in the corpora cardiaca, causes release of diglycerides from the fat body and stimulation of muscles to use these diglycerides as an energy source during energy-demanding processes. The chain is Adipokinetic prohormone type 1 from Schistocerca gregaria (Desert locust).